We begin with the raw amino-acid sequence, 636 residues long: Beta-galactosidase-1-like protein 2 (636 aa).

Residues 1 to 32 (MTTWSLRRRPARTLGLLLLVVLGFLVLRRLDW) form the signal peptide. Catalysis depends on glutamate 201, which acts as the Proton donor. The Nucleophile role is filled by glutamate 277.

The protein belongs to the glycosyl hydrolase 35 family.

The protein resides in the secreted. The sequence is that of Beta-galactosidase-1-like protein 2 (GLB1L2) from Homo sapiens (Human).